Reading from the N-terminus, the 527-residue chain is tRNA pseudouridine synthase Pus10 (527 aa).

Zn(2+) is bound by residues cysteine 21 and cysteine 24. The stretch at 42-87 forms a coiled coil; that stretch reads KELLNELQKFLEPEKPELILEAPNPPLKKIRLHEDGIDNLSEDGKE. A Phosphoserine modification is found at serine 82. Positions 107 and 110 each coordinate Zn(2+). Residues 302–315 are RNA binding forefinger loop; the sequence is TPWIIDGERKMESS. Catalysis depends on aspartate 342, which acts as the Nucleophile. Residues 440–455 are RNA binding thumb loop; it reads QKTPLRVLHRRPLAVR.

It belongs to the pseudouridine synthase Pus10 family. In terms of assembly, interacts with components of the microprocessor complex DROSHA and DGCR8. In terms of processing, proteolytically cleaved during TRAIL-induced cell death. Cleaved, in vitro, either by caspase-3 (CASP3) or caspase-8 (CASP8).

The protein localises to the nucleus. The protein resides in the cytoplasm. Its subcellular location is the mitochondrion. It catalyses the reaction uridine(55) in tRNA = pseudouridine(55) in tRNA. It carries out the reaction uridine(54) in tRNA = pseudouridine(54) in tRNA. Its function is as follows. Protein with different functions depending on its subcellular location: involved in miRNA processing in the nucleus and acts as a tRNA pseudouridylate synthase in the cytoplasm. In the cytoplasm, acts as a pseudouridylate synthase by catalyzing synthesis of pseudouridine(54) and pseudouridine(55) from uracil-54 and uracil-55, respectively, in the psi GC loop of a subset of tRNAs. tRNA pseudouridylate synthase activity is enhanced by the presence of 1-methyladenosine at position 53-61 of tRNAs. Does not show tRNA pseudouridylate synthase activity in the nucleus. In the nucleus, promotes primary microRNAs (pri-miRNAs) processing independently of its RNA pseudouridylate synthase activity. Binds pri-miRNAs. Modulator of TRAIL/TNFSF10-induced cell death via activation of procaspase-8 and BID cleavage. Required for the progression of the apoptotic signal through intrinsic mitochondrial cell death. This chain is tRNA pseudouridine synthase Pus10, found in Mus musculus (Mouse).